A 187-amino-acid chain; its full sequence is Peptide deformylase (187 aa).

Cys-107 and His-149 together coordinate Fe cation. Glu-150 is a catalytic residue. His-153 lines the Fe cation pocket.

This sequence belongs to the polypeptide deformylase family. It depends on Fe(2+) as a cofactor.

It carries out the reaction N-terminal N-formyl-L-methionyl-[peptide] + H2O = N-terminal L-methionyl-[peptide] + formate. Functionally, removes the formyl group from the N-terminal Met of newly synthesized proteins. Requires at least a dipeptide for an efficient rate of reaction. N-terminal L-methionine is a prerequisite for activity but the enzyme has broad specificity at other positions. This Picosynechococcus sp. (strain ATCC 27264 / PCC 7002 / PR-6) (Agmenellum quadruplicatum) protein is Peptide deformylase.